The sequence spans 626 residues: Phosphomethylpyrimidine synthase (626 aa).

The tract at residues 1–27 (MSKQEKAISLSESAQVDQQSVQPLPNS) is disordered. Residues 10-25 (LSESAQVDQQSVQPLP) are compositionally biased toward polar residues. Residues Asn-232, Met-261, Tyr-290, His-326, 346–348 (SRG), 387–390 (DGLR), and Glu-426 each bind substrate. His-430 is a Zn(2+) binding site. Substrate is bound at residue Tyr-453. Zn(2+) is bound at residue His-494. Residues Cys-574, Cys-577, and Cys-582 each contribute to the [4Fe-4S] cluster site.

The protein belongs to the ThiC family. In terms of assembly, homodimer. [4Fe-4S] cluster is required as a cofactor.

The catalysed reaction is 5-amino-1-(5-phospho-beta-D-ribosyl)imidazole + S-adenosyl-L-methionine = 4-amino-2-methyl-5-(phosphooxymethyl)pyrimidine + CO + 5'-deoxyadenosine + formate + L-methionine + 3 H(+). The protein operates within cofactor biosynthesis; thiamine diphosphate biosynthesis. Its function is as follows. Catalyzes the synthesis of the hydroxymethylpyrimidine phosphate (HMP-P) moiety of thiamine from aminoimidazole ribotide (AIR) in a radical S-adenosyl-L-methionine (SAM)-dependent reaction. This is Phosphomethylpyrimidine synthase from Pseudomonas entomophila (strain L48).